A 137-amino-acid chain; its full sequence is Small ribosomal subunit protein bS16m (137 aa).

Residues 1 to 34 (MVHLTTLLCKAYRGGHLTIRLALGGCTNRPFYRI) constitute a mitochondrion transit peptide. Phosphothreonine is present on Thr130.

Belongs to the bacterial ribosomal protein bS16 family. In terms of assembly, component of the mitochondrial small ribosomal subunit (mt-SSU). Mature mammalian 55S mitochondrial ribosomes consist of a small (28S) and a large (39S) subunit. The 28S small subunit contains a 12S ribosomal RNA (12S mt-rRNA) and 30 different proteins. The 39S large subunit contains a 16S rRNA (16S mt-rRNA), a copy of mitochondrial valine transfer RNA (mt-tRNA(Val)), which plays an integral structural role, and 52 different proteins. bS16m has a zinc binding site.

It localises to the mitochondrion. The polypeptide is Small ribosomal subunit protein bS16m (MRPS16) (Homo sapiens (Human)).